A 332-amino-acid polypeptide reads, in one-letter code: Putative integrase/recombinase y4rC (332 aa).

The Core-binding (CB) domain maps to 5-98; sequence ASLAPLLESF…AIHSFFRYAA (94 aa). A Tyr recombinase domain is found at 122–307; that stretch reads TLVNFLTRPE…TLAMKEAALA (186 aa). Residues Arg-162, Lys-187, His-259, Arg-262, and His-285 contribute to the active site. The active-site O-(3'-phospho-DNA)-tyrosine intermediate is Tyr-294.

The protein belongs to the 'phage' integrase family.

The sequence is that of Putative integrase/recombinase y4rC from Sinorhizobium fredii (strain NBRC 101917 / NGR234).